The following is a 191-amino-acid chain: GDP-mannose pyrophosphatase (191 aa).

GDP-alpha-D-mannose contacts are provided by residues tyrosine 17, 38–40 (KRE), arginine 67, and 85–87 (AGL). A Nudix hydrolase domain is found at 43-180 (DRGNGATILL…EIRDGKTVLL (138 aa)). The Mg(2+) site is built by alanine 85, glutamate 100, and glutamate 104. The Nudix box signature appears at 86–106 (GLLDNDEPEVCIRKEAIEETG). GDP-alpha-D-mannose-binding positions include glutamate 104, glutamate 127, 150–151 (DE), and lysine 176. Residue glutamate 151 participates in Mg(2+) binding.

The protein belongs to the Nudix hydrolase family. NudK subfamily. As to quaternary structure, homodimer. Mg(2+) serves as cofactor.

The catalysed reaction is GDP-alpha-D-mannose + H2O = alpha-D-mannose 1-phosphate + GMP + 2 H(+). In terms of biological role, nucleoside diphosphate sugar hydrolase that hydrolyzes GDP-mannose as its preferred substrate, yielding GMP and mannose-1-phosphate. The sequence is that of GDP-mannose pyrophosphatase (nudK) from Salmonella choleraesuis (strain SC-B67).